The chain runs to 120 residues: MTENRRIKRVNALLQEAIAKVILKDVKHPKISNLWITVTRVSLSKDLHSARVYVSVMPHENTKEEALEALKVSAGFIAHRASKNVVLKYFPELHFYLDDIFSPQDYIENLLWQIQEKEKS.

The protein belongs to the RbfA family. Monomer. Binds 30S ribosomal subunits, but not 50S ribosomal subunits or 70S ribosomes.

It localises to the cytoplasm. In terms of biological role, one of several proteins that assist in the late maturation steps of the functional core of the 30S ribosomal subunit. Associates with free 30S ribosomal subunits (but not with 30S subunits that are part of 70S ribosomes or polysomes). Required for efficient processing of 16S rRNA. May interact with the 5'-terminal helix region of 16S rRNA. In Chlamydia pneumoniae (Chlamydophila pneumoniae), this protein is Ribosome-binding factor A.